The following is a 244-amino-acid chain: rRNA adenine N-6-methyltransferase (244 aa).

Residues Asn11, Ile13, Gly38, Glu59, Asp84, and Asn101 each contribute to the S-adenosyl-L-methionine site.

This sequence belongs to the class I-like SAM-binding methyltransferase superfamily. rRNA adenine N(6)-methyltransferase family.

The catalysed reaction is adenosine(2085) in 23S rRNA + 2 S-adenosyl-L-methionine = N(6)-dimethyladenosine(2085) in 23S rRNA + 2 S-adenosyl-L-homocysteine + 2 H(+). In terms of biological role, this protein produces a dimethylation of the adenine residue at position 2085 in 23S rRNA, resulting in reduced affinity between ribosomes and macrolide-lincosamide-streptogramin B antibiotics. The polypeptide is rRNA adenine N-6-methyltransferase (ermC) (Staphylococcus aureus).